Consider the following 340-residue polypeptide: Probable peroxidase 61 (340 aa).

The N-terminal stretch at 1–25 is a signal peptide; the sequence is MQFVNFFPLLALVVISLAGKATVEA. Intrachain disulfides connect Cys46/Cys122, Cys79/Cys84, Cys128/Cys331, and Cys205/Cys237. Asn63 carries N-linked (GlcNAc...) asparagine glycosylation. The active site involves Arg73. Asp78, Val81, Gly83, Asp85, and Ser87 together coordinate Ca(2+). Pro168 provides a ligand contact to substrate. His198 contributes to the heme b binding site. Ca(2+) is bound at residue Ser199. An N-linked (GlcNAc...) asparagine glycan is attached at Asn226. Residues Asp255 and Ser258 each contribute to the Ca(2+) site.

Belongs to the peroxidase family. Classical plant (class III) peroxidase subfamily. It depends on heme b as a cofactor. Ca(2+) is required as a cofactor.

Its subcellular location is the secreted. The enzyme catalyses 2 a phenolic donor + H2O2 = 2 a phenolic radical donor + 2 H2O. Functionally, removal of H(2)O(2), oxidation of toxic reductants, biosynthesis and degradation of lignin, suberization, auxin catabolism, response to environmental stresses such as wounding, pathogen attack and oxidative stress. The enzyme activity has to be proved. This chain is Probable peroxidase 61 (PER61), found in Arabidopsis thaliana (Mouse-ear cress).